Here is a 1045-residue protein sequence, read N- to C-terminus: Putative sodium-coupled neutral amino acid transporter 10 (1045 aa).

10 consecutive transmembrane segments (helical) span residues 8–28 (LIMNIVNSIVGVSVLTMPFCF), 33–53 (ILLGTLLLMLCTWMAHHSCMF), 85–105 (SMIGLMLGTCIAFYVVIGDLG), 117–137 (VSEGFRVFLLFSVSLCIVLPL), 150–170 (FSAMALMFYTVFMFVIVLSSF), 226–246 (IFALSLNVVTTFYITVGFFGY), 269–289 (MIRVGFMMSVAVGFPMMILPC), 320–340 (ILTLVVVFGTMLGGILIPNVE), 342–362 (ILGLTGATMGSLICLICPALI), and 375–395 (FILGVGLLILVISTYTTLTVT). Composition is skewed to basic and acidic residues over residues 412–453 (KEEK…EEQI), 460–479 (PQKEKDTKKQEEVQLDRPDQ), and 503–546 (VDEK…DQAE). Disordered stretches follow at residues 412–584 (KEEK…EQPP) and 606–658 (EIAE…AEAG). Positions 564-573 (NDPNKQQLVN) are enriched in polar residues. A compositionally biased stretch (basic and acidic residues) spans 627–658 (PIKDEKNEQIPGDPGKESHVEPKAEDNQAEAG).

Belongs to the amino acid/polyamine transporter 2 family.

It localises to the membrane. In terms of biological role, putative sodium-dependent amino acid/proton antiporter. The protein is Putative sodium-coupled neutral amino acid transporter 10 (slc38a10) of Xenopus laevis (African clawed frog).